Reading from the N-terminus, the 416-residue chain is MGLERVVVIGLGVSGRSIARFLAQKGVCVLGVDKSLHALQNCPYIQEKYLENEEFPSQVDYVVRSPGVSKEHPWVQAAIASHIPVMTDIQLAFQTEKFTERESLAITGTTGKTTTILFLEYLFKRSGIPAFAMGNVGIPILDGMQNPGVRIVEISSFQLADQEKSYPVLSGGMILNISDNHLDYHGNFSEYFQAKQNLALCMRNPDDLWVGDERFYGHLYLEEVQKYMRLLDKESALKPLYLHDKHNYCCAYLLAKIEFPISETSFIEAVATFNKPPHRMEYLGQKQGIHYINDSKATTVSATETALLGVGNQAIVILGGRNKGCTFSSLLPALRKAAKSVVAMGECAQEIARDLEEFPVTVVKNLSEALLCAEEQAVPGDVIVLSPACASFDQFRSYEERGAMFKHLVGMEEVLL.

Residue 108-114 (GTTGKTT) participates in ATP binding.

The protein belongs to the MurCDEF family.

It is found in the cytoplasm. The enzyme catalyses UDP-N-acetyl-alpha-D-muramoyl-L-alanine + D-glutamate + ATP = UDP-N-acetyl-alpha-D-muramoyl-L-alanyl-D-glutamate + ADP + phosphate + H(+). It functions in the pathway cell wall biogenesis; peptidoglycan biosynthesis. Cell wall formation. Catalyzes the addition of glutamate to the nucleotide precursor UDP-N-acetylmuramoyl-L-alanine (UMA). The chain is UDP-N-acetylmuramoylalanine--D-glutamate ligase from Chlamydia trachomatis serovar L2b (strain UCH-1/proctitis).